A 183-amino-acid polypeptide reads, in one-letter code: D-glycero-alpha-D-manno-heptose-1,7-bisphosphate 7-phosphatase (183 aa).

Cysteine 93, histidine 95, cysteine 108, and cysteine 110 together coordinate Zn(2+).

This sequence belongs to the GmhB family.

The protein resides in the cytoplasm. It carries out the reaction D-glycero-alpha-D-manno-heptose 1,7-bisphosphate + H2O = D-glycero-alpha-D-manno-heptose 1-phosphate + phosphate. It functions in the pathway nucleotide-sugar biosynthesis; GDP-D-glycero-alpha-D-manno-heptose biosynthesis; GDP-D-glycero-alpha-D-manno-heptose from D-glycero-alpha-D-manno-heptose 7-phosphate: step 2/3. Its function is as follows. Converts the D-glycero-alpha-D-manno-heptose 1,7-bisphosphate intermediate into D-glycero-alpha-D-manno-heptose 1-phosphate by removing the phosphate group at the C-7 position. The polypeptide is D-glycero-alpha-D-manno-heptose-1,7-bisphosphate 7-phosphatase (gmhB2) (Photorhabdus laumondii subsp. laumondii (strain DSM 15139 / CIP 105565 / TT01) (Photorhabdus luminescens subsp. laumondii)).